The following is a 435-amino-acid chain: U-box domain-containing protein 21 (435 aa).

Residues 30–104 (TIPPEFQCPI…QGWCVEKGSP (75 aa)) enclose the U-box domain. ARM repeat units lie at residues 202-241 (LEGISKLASATSFRCVAGLLKSTDDSVRQNAAFIMKEILS), 245-285 (TRVH…QMVL), 288-327 (PEIASEFLEIGLVSITVEMIVDAENSVCEKALAVLDAICE), and 329-369 (EHGR…KLWK).

The catalysed reaction is S-ubiquitinyl-[E2 ubiquitin-conjugating enzyme]-L-cysteine + [acceptor protein]-L-lysine = [E2 ubiquitin-conjugating enzyme]-L-cysteine + N(6)-ubiquitinyl-[acceptor protein]-L-lysine.. It functions in the pathway protein modification; protein ubiquitination. Functions as an E3 ubiquitin ligase. This chain is U-box domain-containing protein 21 (PUB21), found in Arabidopsis thaliana (Mouse-ear cress).